The following is a 492-amino-acid chain: Adenosylhomocysteinase-like 2 (492 aa).

A disordered region spans residues 43 to 64 (FTGSSDEEDVSPKDNHQRNSAG). Residues aspartate 192 and glutamate 217 each contribute to the substrate site. NAD(+) is bound at residue 218–220 (SVT). Substrate contacts are provided by lysine 247 and aspartate 251. NAD(+) is bound by residues 283–288 (GDVGKG), glutamate 304, 360–362 (MGH), asparagine 407, lysine 486, 486–490 (KANYY), and tyrosine 490.

Belongs to the adenosylhomocysteinase family. NAD(+) is required as a cofactor.

Might play a role in the regulation of methionine metabolism. The chain is Adenosylhomocysteinase-like 2 from Drosophila melanogaster (Fruit fly).